A 616-amino-acid chain; its full sequence is Dihydroxy-acid dehydratase (616 aa).

D81 serves as a coordination point for Mg(2+). [2Fe-2S] cluster is bound at residue C122. Mg(2+)-binding residues include D123 and K124. The residue at position 124 (K124) is an N6-carboxylysine. C195 is a [2Fe-2S] cluster binding site. Residue E491 participates in Mg(2+) binding. S517 acts as the Proton acceptor in catalysis.

This sequence belongs to the IlvD/Edd family. Homodimer. Requires [2Fe-2S] cluster as cofactor. The cofactor is Mg(2+).

The catalysed reaction is (2R)-2,3-dihydroxy-3-methylbutanoate = 3-methyl-2-oxobutanoate + H2O. The enzyme catalyses (2R,3R)-2,3-dihydroxy-3-methylpentanoate = (S)-3-methyl-2-oxopentanoate + H2O. It functions in the pathway amino-acid biosynthesis; L-isoleucine biosynthesis; L-isoleucine from 2-oxobutanoate: step 3/4. Its pathway is amino-acid biosynthesis; L-valine biosynthesis; L-valine from pyruvate: step 3/4. Functions in the biosynthesis of branched-chain amino acids. Catalyzes the dehydration of (2R,3R)-2,3-dihydroxy-3-methylpentanoate (2,3-dihydroxy-3-methylvalerate) into 2-oxo-3-methylpentanoate (2-oxo-3-methylvalerate) and of (2R)-2,3-dihydroxy-3-methylbutanoate (2,3-dihydroxyisovalerate) into 2-oxo-3-methylbutanoate (2-oxoisovalerate), the penultimate precursor to L-isoleucine and L-valine, respectively. This is Dihydroxy-acid dehydratase from Serratia proteamaculans (strain 568).